The following is a 215-amino-acid chain: Octanoyltransferase (215 aa).

Residues 33-209 (PDTPDQLWLV…QFARKLGYET (177 aa)) form the BPL/LPL catalytic domain. Substrate is bound by residues 72–79 (RGGQVTYH), 139–141 (SLG), and 152–154 (GLA). C170 functions as the Acyl-thioester intermediate in the catalytic mechanism.

It belongs to the LipB family.

The protein resides in the cytoplasm. The enzyme catalyses octanoyl-[ACP] + L-lysyl-[protein] = N(6)-octanoyl-L-lysyl-[protein] + holo-[ACP] + H(+). It functions in the pathway protein modification; protein lipoylation via endogenous pathway; protein N(6)-(lipoyl)lysine from octanoyl-[acyl-carrier-protein]: step 1/2. In terms of biological role, catalyzes the transfer of endogenously produced octanoic acid from octanoyl-acyl-carrier-protein onto the lipoyl domains of lipoate-dependent enzymes. Lipoyl-ACP can also act as a substrate although octanoyl-ACP is likely to be the physiological substrate. In Cellvibrio japonicus (strain Ueda107) (Pseudomonas fluorescens subsp. cellulosa), this protein is Octanoyltransferase.